Here is a 299-residue protein sequence, read N- to C-terminus: 5,10-dihydrophenazine-1-carboxylate 9-dimethylallyltransferase (299 aa).

The protein belongs to the aromatic prenyltransferase family.

It carries out the reaction 5,10-dihydrophenazine 1-carboxylate + dimethylallyl diphosphate = 5,10-dihydro-9-dimethylallylphenazine 1-carboxylate + diphosphate. It functions in the pathway antibiotic biosynthesis; phenazine biosynthesis. With respect to regulation, does not require magnesium or any other divalent metal ions for activity. Its function is as follows. Involved in the biosynthesis of prenylated phenazines. Catalyzes the transfer of a dimethylallyl moiety to C-9 of 5,10-dihydrophenazine 1-carboxylate (dihydro-PCA). Specific for both dimethylallyl diphosphate and dihydro-PCA. In Streptomyces anulatus (Streptomyces chrysomallus), this protein is 5,10-dihydrophenazine-1-carboxylate 9-dimethylallyltransferase.